The sequence spans 93 residues: MSILDYLRSLQKRRSASIAKERLQIIVAHERNGLSRRTLDFLPLLQKELLDVVRKYVEVSDSQIKVNLEKNGNYEVLEVNIALADAEGRFSMS.

It belongs to the MinE family.

Functionally, prevents the cell division inhibition by proteins MinC and MinD at internal division sites while permitting inhibition at polar sites. This ensures cell division at the proper site by restricting the formation of a division septum at the midpoint of the long axis of the cell. The polypeptide is Cell division topological specificity factor (Syntrophus aciditrophicus (strain SB)).